Here is a 680-residue protein sequence, read N- to C-terminus: Tumor protein 63 (680 aa).

Residues 1-107 (MNFETSRCAT…MQDSDLSDPM (107 aa)) form a transcription activation region. Positions 122-157 (QQIQNGSSSTSPYNTDHAQNSVTAPSPYAQPSSTFD) are enriched in polar residues. The interval 122–171 (QQIQNGSSSTSPYNTDHAQNSVTAPSPYAQPSSTFDALSPSPAIPSNTDY) is disordered. Residues 170–362 (DYPGPHSFDV…KADEDSIRKQ (193 aa)) mediate DNA binding. 4 residues coordinate Zn(2+): cysteine 244, histidine 247, cysteine 308, and cysteine 312. A compositionally biased stretch (basic and acidic residues) spans 351 to 360 (DRKADEDSIR). 2 disordered regions span residues 351-393 (DRKA…IKKR) and 436-472 (RQQQQQQHQHLLQKQTSMQSQSSYGNSSPPLNKMNSM). The segment at 352–388 (RKADEDSIRKQQVSDSAKNGDGTKRPFRQNTHGIQMT) is interaction with HIPK2. Over residues 379-389 (RQNTHGIQMTS) the composition is skewed to polar residues. Positions 394–443 (RSPDDELLYLPVRGRETYEMLLKIKESLELMQYLPQHTIETYRQQQQQQH) are oligomerization. Over residues 437–463 (QQQQQQHQHLLQKQTSMQSQSSYGNSS) the composition is skewed to low complexity. One can recognise an SAM domain in the interval 541 to 607 (PPYPTDCSIV…WKGILDHRQL (67 aa)). The transactivation inhibition stretch occupies residues 610–680 (FSSPPHLLRT…KQQRIKEEGE (71 aa)). Lysine 676 is covalently cross-linked (Glycyl lysine isopeptide (Lys-Gly) (interchain with G-Cter in SUMO)).

It belongs to the p53 family. As to quaternary structure, binds DNA as a homotetramer. Isoform composition of the tetramer may determine transactivation activity. Interacts with HIPK2. Interacts with SSRP1, leading to stimulate coactivator activity. Interacts with WWP1. Interacts with PDS5A. Interacts (via activation domain) with NOC2L. The cofactor is Zn(2+). May be sumoylated. In terms of processing, ubiquitinated. Polyubiquitination involves WWP1 and leads to proteasomal degradation of this protein. As to expression, widely expressed, notably in thymus, prostate, placenta, and skeletal muscle, although the precise isoform varies according to tissue type. Progenitor cell layers of skin, breast and prostate express high levels of DeltaN-type isoforms.

The protein localises to the nucleus. Functionally, acts as a sequence specific DNA binding transcriptional activator or repressor. The isoforms contain a varying set of transactivation and auto-regulating transactivation inhibiting domains thus showing an isoform specific activity. May be required in conjunction with TP73/p73 for initiation of p53/TP53 dependent apoptosis in response to genotoxic insults and the presence of activated oncogenes. Involved in Notch signaling by probably inducing JAG1 and JAG2. Activates RIPK4 transcription. Plays a role in the regulation of epithelial morphogenesis. The ratio of DeltaN-type and TA*-type isoforms may govern the maintenance of epithelial stem cell compartments and regulate the initiation of epithelial stratification from the undifferentiated embryonal ectoderm. Required for limb formation from the apical ectodermal ridge. Activates transcription of the p21 promoter. The polypeptide is Tumor protein 63 (Tp63) (Rattus norvegicus (Rat)).